Here is a 994-residue protein sequence, read N- to C-terminus: MVLAPLLLGLLLLPALWSGGTAEKWEETELDQLFSGPLPGRLPVNHRPFSAPHSSRDQLPPPQTGRSHPAHTAAPQVTSTASKLLPPVAFNHTIGHIVLSEHKNVKFNCSINIPNTYQETAGISWWKDGKELLGAHHSITQFYPDEEGVSIIALFSIASVQRSDNGSYFCKMKVNNREIVSDPIYVEVQGLPYFIKQPESVNVTRNTAFNLTCQAVGPPEPVNIFWVQNSSRVNEKPERSPSVLTVPGLTETAVFSCEAHNDKGLTVSKGVHINIKVIPSPPTEVHILNSTAHSILVSWVPGFDGYSPLQNCSIQVKEADRLSNGSVMVFNTSASPHLYEIQQLQALANYSIAVSCRNEIGWSAVSPWILASTTEGAPSVAPLNITVFLNESNNILDIRWTKPPIKRQDGELVGYRISHVWESAGTYKELSEEVSQNGSWAQIPVQIHNATCTVRIAAITKGGIGPFSEPVNIIIPEHSKVDYAPSSTPAPGNTDSMFIILGCFCGFILIGLILCISLALRRRVQETKFGGAFSEEDSQLVVNYRAKKSFCRRAIELTLQSLGVSEELQNKLEDVVIDRNLLVLGKVLGEGEFGSVMEGNLKQEDGTSQKVAVKTMKLDNFSQREIEEFLSEAACMKDFNHPNVIRLLGVCIELSSQGIPKPMVILPFMKYGDLHTFLLYSRLNTGPKYIHLQTLLKFMMDIAQGMEYLSNRNFLHRDLAARNCMLRDDMTVCVADFGLSKKIYSGDYYRQGRIAKMPVKWIAIESLADRVYTSKSDVWAFGVTMWEITTRGMTPYPGVQNHEMYDYLLHGHRLKQPEDCLDELYDIMYSCWSADPLDRPTFSVLRLQLEKLSESLPDAQDKESIIYINTQLLESCEGIANGPSLTGLDMNIDPDSIIASCTPGAAVSVVTAEVHENNLREERYILNGGNEEWEDVSSTPFAAVTPEKDGVLPEDRLTKNGVSWSHHSTLPLGSPSPDELLFVDDSLEDSEVLM.

An N-terminal signal peptide occupies residues 1-18 (MVLAPLLLGLLLLPALWS). Residues 19 to 497 (GGTAEKWEET…TPAPGNTDSM (479 aa)) are Extracellular-facing. The disordered stretch occupies residues 44–78 (VNHRPFSAPHSSRDQLPPPQTGRSHPAHTAAPQVT). Ig-like C2-type domains are found at residues 75–181 (PQVT…EIVS) and 192–268 (PYFI…LTVS). N-linked (GlcNAc...) asparagine glycans are attached at residues Asn91, Asn108, Asn165, Asn202, Asn210, Asn229, Asn289, Asn311, Asn324, Asn331, Asn349, Asn384, Asn390, Asn437, and Asn449. An intrachain disulfide couples Cys109 to Cys170. Cys213 and Cys257 are disulfide-bonded. Fibronectin type-III domains lie at 281–376 (PPTE…TTEG) and 381–478 (APLN…IPEH). A helical transmembrane segment spans residues 498–518 (FIILGCFCGFILIGLILCISL). Residues 519–994 (ALRRRVQETK…DSLEDSEVLM (476 aa)) lie on the Cytoplasmic side of the membrane. The residue at position 538 (Ser538) is a Phosphoserine. The Protein kinase domain occupies 582–852 (LVLGKVLGEG…SVLRLQLEKL (271 aa)). ATP contacts are provided by residues 588–596 (LGEGEFGSV) and Lys610. Asp718 acts as the Proton acceptor in catalysis. Phosphotyrosine; by autocatalysis is present on residues Tyr744, Tyr748, Tyr749, and Tyr867.

It belongs to the protein kinase superfamily. Tyr protein kinase family. AXL/UFO subfamily. Interacts (upon activation) with TNK2; stimulates TNK2 autophosphorylation. Interacts (via N-terminus) with extracellular ligands LGALS3, TUB, TULP1 and GAS6. Interacts with VAV1 in a phosphotyrosine-independent manner. Interacts with TIMD4; this interaction enhances TIMD4-mediated efferocytosis. Post-translationally, autophosphorylated on Tyr-744, Tyr-748 and Tyr-749 in the activation loop allowing full activity. Autophosphorylated on Tyr-867 leading to recruitment of downstream partners of the signaling cascade such as PLCG2. Expressed predominantly in the hematopoietic lineages: macrophages, NK cells, NKT cells, dendritic cells and platelets.

It is found in the cell membrane. It catalyses the reaction L-tyrosyl-[protein] + ATP = O-phospho-L-tyrosyl-[protein] + ADP + H(+). In terms of biological role, receptor tyrosine kinase that transduces signals from the extracellular matrix into the cytoplasm by binding to several ligands including LGALS3, TUB, TULP1 or GAS6. Regulates many physiological processes including cell survival, migration, differentiation, and phagocytosis of apoptotic cells (efferocytosis). Ligand binding at the cell surface induces autophosphorylation of MERTK on its intracellular domain that provides docking sites for downstream signaling molecules. Following activation by ligand, interacts with GRB2 or PLCG2 and induces phosphorylation of MAPK1, MAPK2, FAK/PTK2 or RAC1. MERTK signaling plays a role in various processes such as macrophage clearance of apoptotic cells, platelet aggregation, cytoskeleton reorganization and engulfment. Functions in the retinal pigment epithelium (RPE) as a regulator of rod outer segments fragments phagocytosis. Also plays an important role in inhibition of Toll-like receptors (TLRs)-mediated innate immune response by activating STAT1, which selectively induces production of suppressors of cytokine signaling SOCS1 and SOCS3. The chain is Tyrosine-protein kinase Mer (Mertk) from Mus musculus (Mouse).